A 303-amino-acid polypeptide reads, in one-letter code: Diaminopimelate epimerase (303 aa).

The substrate site is built by Asn15, Gln47, and Asn67. Cys76 acts as the Proton donor in catalysis. Substrate-binding positions include 77–78, Asn163, Asn197, and 215–216; these read GN and ER. The Proton acceptor role is filled by Cys224. 225 to 226 contributes to the substrate binding site; the sequence is GS. The tract at residues 278 to 303 is disordered; that stretch reads FDPATGEWSRDTQGLQGSGNADRGAA.

Belongs to the diaminopimelate epimerase family. As to quaternary structure, homodimer.

Its subcellular location is the cytoplasm. It catalyses the reaction (2S,6S)-2,6-diaminopimelate = meso-2,6-diaminopimelate. It participates in amino-acid biosynthesis; L-lysine biosynthesis via DAP pathway; DL-2,6-diaminopimelate from LL-2,6-diaminopimelate: step 1/1. Its function is as follows. Catalyzes the stereoinversion of LL-2,6-diaminopimelate (L,L-DAP) to meso-diaminopimelate (meso-DAP), a precursor of L-lysine and an essential component of the bacterial peptidoglycan. The protein is Diaminopimelate epimerase of Brucella melitensis biotype 1 (strain ATCC 23456 / CCUG 17765 / NCTC 10094 / 16M).